Reading from the N-terminus, the 508-residue chain is Photosystem II CP47 reaction center protein (508 aa).

Transmembrane regions (helical) follow at residues 21–36, 101–115, 140–156, 203–218, 237–252, and 457–472; these read SVHI…WAGS, IVFS…IWHW, GIHL…FGAF, IAAG…FHLS, VLSS…AFVV, and SFAL…HGSR.

It belongs to the PsbB/PsbC family. PsbB subfamily. As to quaternary structure, PSII is composed of 1 copy each of membrane proteins PsbA, PsbB, PsbC, PsbD, PsbE, PsbF, PsbH, PsbI, PsbJ, PsbK, PsbL, PsbM, PsbT, PsbX, PsbY, PsbZ, Psb30/Ycf12, at least 3 peripheral proteins of the oxygen-evolving complex and a large number of cofactors. It forms dimeric complexes. Binds multiple chlorophylls. PSII binds additional chlorophylls, carotenoids and specific lipids. serves as cofactor.

It is found in the plastid. The protein localises to the chloroplast thylakoid membrane. One of the components of the core complex of photosystem II (PSII). It binds chlorophyll and helps catalyze the primary light-induced photochemical processes of PSII. PSII is a light-driven water:plastoquinone oxidoreductase, using light energy to abstract electrons from H(2)O, generating O(2) and a proton gradient subsequently used for ATP formation. This Lobularia maritima (Sweet alyssum) protein is Photosystem II CP47 reaction center protein.